The chain runs to 132 residues: Small ribosomal subunit protein uS8 (132 aa).

It belongs to the universal ribosomal protein uS8 family. In terms of assembly, part of the 30S ribosomal subunit. Contacts proteins S5 and S12.

In terms of biological role, one of the primary rRNA binding proteins, it binds directly to 16S rRNA central domain where it helps coordinate assembly of the platform of the 30S subunit. The protein is Small ribosomal subunit protein uS8 of Cereibacter sphaeroides (strain ATCC 17029 / ATH 2.4.9) (Rhodobacter sphaeroides).